Consider the following 172-residue polypeptide: MALETCFRAWATLHAPQPPSSGGSRDRLLLSGAGSSQSKPRLSVASPSPLRPASRFACQCSNVVDEVVVADEKNWDSMVLGSEAPVLVEFWAPWCGPCRMIAPVIDELAKEYVGKIKCCKVNTDDSPNIATNYGIRSIPTVLMFKNGEKKESVIGAVPKTTLATIIDKYVSS.

The transit peptide at 1-59 directs the protein to the chloroplast; it reads MALETCFRAWATLHAPQPPSSGGSRDRLLLSGAGSSQSKPRLSVASPSPLRPASRFACQ. The interval 17-47 is disordered; the sequence is QPPSSGGSRDRLLLSGAGSSQSKPRLSVASP. One can recognise a Thioredoxin domain in the interval 60–171; the sequence is CSNVVDEVVV…LATIIDKYVS (112 aa). Catalysis depends on nucleophile residues Cys-95 and Cys-98. A disulfide bridge connects residues Cys-95 and Cys-98.

It belongs to the thioredoxin family. Plant M-type subfamily. Expressed in leaves and at lower levels in flowers.

The protein resides in the plastid. It is found in the chloroplast. In terms of biological role, thiol-disulfide oxidoreductase probably involved in the redox regulation of chloroplastic enzymes. Required for chloroplast biogenesis and differentiation. Functions as an electron donor for plastidial 2-Cys peroxiredoxins and participates in hydrogen peroxide scavenging system in chloroplasts. Possesses reducing activity towards insulin disulfide bonds. The chain is Thioredoxin M5, chloroplastic (TRXM) from Oryza sativa subsp. japonica (Rice).